Consider the following 726-residue polypeptide: E3 SUMO-protein ligase SIZ2 (726 aa).

An SAP domain is found at 43 to 77; the sequence is MEQLKVLELKQICKSLDLSITGKKAVLQDRIKQFL. The PINIT domain maps to 139 to 291; sequence TALPPYSQQQ…SISCFIVEVF (153 aa). The SP-RING-type zinc finger occupies 323-408; the sequence is DDDDIITTST…IQNCNEDVEQ (86 aa). Cys-354, His-356, Cys-377, and Cys-380 together coordinate Zn(2+). Residues 507–533 form a disordered region; the sequence is PSESEGSSDYNPNHTSTPKGSPTMDQD. A compositionally biased stretch (polar residues) spans 510 to 533; sequence SEGSSDYNPNHTSTPKGSPTMDQD.

The protein belongs to the PIAS family. In terms of assembly, interacts with CDC12. Post-translationally, autosumoylated upon ethanol stress.

Its subcellular location is the nucleus. The protein operates within protein modification; protein sumoylation. Functionally, may act as an E3 ligase mediating SUMO/Smt3 attachment to septins. May be involved in chromosome maintenance. The sequence is that of E3 SUMO-protein ligase SIZ2 (NFI1) from Saccharomyces cerevisiae (strain ATCC 204508 / S288c) (Baker's yeast).